The primary structure comprises 112 residues: UPF0102 protein NIS_1551 (112 aa).

This sequence belongs to the UPF0102 family.

The chain is UPF0102 protein NIS_1551 from Nitratiruptor sp. (strain SB155-2).